The chain runs to 211 residues: 2,3-bisphosphoglycerate-dependent phosphoglycerate mutase (211 aa).

Residues 9 to 16 (RHGQSDWN), 22 to 23 (TG), arginine 61, 88 to 91 (ERDY), lysine 99, 115 to 116 (RR), and 159 to 160 (GN) each bind substrate. Catalysis depends on histidine 10, which acts as the Tele-phosphohistidine intermediate. Glutamate 88 acts as the Proton donor/acceptor in catalysis.

The protein belongs to the phosphoglycerate mutase family. BPG-dependent PGAM subfamily. Homodimer.

The enzyme catalyses (2R)-2-phosphoglycerate = (2R)-3-phosphoglycerate. It functions in the pathway carbohydrate degradation; glycolysis; pyruvate from D-glyceraldehyde 3-phosphate: step 3/5. Catalyzes the interconversion of 2-phosphoglycerate and 3-phosphoglycerate. The sequence is that of 2,3-bisphosphoglycerate-dependent phosphoglycerate mutase from Rhizobium meliloti (strain 1021) (Ensifer meliloti).